The chain runs to 284 residues: Proteasome subunit beta 1 (284 aa).

A propeptide spans 1 to 54 (MAQRDTGGRLGAEFFTPGDSSFTAFLAAHRPALLSTRGLLPDGVRAAPDRVPHG) (removed in mature form; by autocatalysis). T55 functions as the Nucleophile in the catalytic mechanism. Residues 256-277 (RLPESETEDLSREMVEQRHTRP) are compositionally biased toward basic and acidic residues. The segment at 256–284 (RLPESETEDLSREMVEQRHTRPDGPTAAM) is disordered.

The protein belongs to the peptidase T1B family. The 20S proteasome core is composed of 14 alpha and 14 beta subunits that assemble into four stacked heptameric rings, resulting in a barrel-shaped structure. The two inner rings, each composed of seven catalytic beta subunits, are sandwiched by two outer rings, each composed of seven alpha subunits. The catalytic chamber with the active sites is on the inside of the barrel. Has a gated structure, the ends of the cylinder being occluded by the N-termini of the alpha-subunits. Is capped by the proteasome-associated ATPase, ARC.

The protein resides in the cytoplasm. The catalysed reaction is Cleavage of peptide bonds with very broad specificity.. It functions in the pathway protein degradation; proteasomal Pup-dependent pathway. With respect to regulation, the formation of the proteasomal ATPase ARC-20S proteasome complex, likely via the docking of the C-termini of ARC into the intersubunit pockets in the alpha-rings, may trigger opening of the gate for substrate entry. Interconversion between the open-gate and close-gate conformations leads to a dynamic regulation of the 20S proteasome proteolysis activity. Its function is as follows. Component of the proteasome core, a large protease complex with broad specificity involved in protein degradation. In Streptomyces avermitilis (strain ATCC 31267 / DSM 46492 / JCM 5070 / NBRC 14893 / NCIMB 12804 / NRRL 8165 / MA-4680), this protein is Proteasome subunit beta 1.